Consider the following 319-residue polypeptide: Ankyrin repeat domain-containing protein 1 (319 aa).

A disordered region spans residues 46 to 65 (KTLPANSVKQGEEQRKSEKL). Residues 53–89 (VKQGEEQRKSEKLREAELKKKKLEQRSKLENLEDLEI) adopt a coiled-coil conformation. Over residues 55–65 (QGEEQRKSEKL) the composition is skewed to basic and acidic residues. ANK repeat units follow at residues 152-181 (YKRTALHRACLEGHLAIVEKLMEAGAQIEF), 185-214 (LESTAIHWACRGGNADVLKLLLNKGAKISA), 218-247 (LLSTALHVAVRTGHYECAEHLIACEADLNA), 251-280 (EGDTPLHDAVRLNRYKMIRLLMTFGADLKV), and 284-315 (AGKTPMDLVLHWQSGTKAIFDSLKENAYKNSR).

Interacts with TTN/titin and YBX1. In terms of tissue distribution, expressed in heart, cardiac muscle.

Its subcellular location is the nucleus. May play an important role in endothelial cell activation. May act as a nuclear transcription factor that negatively regulates the expression of cardiac genes. This Mus musculus (Mouse) protein is Ankyrin repeat domain-containing protein 1 (Ankrd1).